The chain runs to 2958 residues: Protein CSF1 (2958 aa).

Residues 1-17 (MEAISQLRGVPLTHQKD) are Cytoplasmic-facing. The helical; Signal-anchor for type II membrane protein transmembrane segment at 18 to 38 (FSWVFLVDWILTVVVCLTMIF) threads the bilayer. The Extracellular segment spans residues 39–2958 (YMGRIYAYLV…QYVKILDDTH (2920 aa)). 10 N-linked (GlcNAc...) asparagine glycosylation sites follow: Asn82, Asn117, Asn144, Asn271, Asn478, Asn530, Asn816, Asn821, Asn839, and Asn892. The disordered stretch occupies residues 813-834 (GYQNSSLKNESEDKGPMKRSDL). Positions 821–834 (NESEDKGPMKRSDL) are enriched in basic and acidic residues. The tract at residues 1175-1196 (MEPSRASFSEDDNDEEADPSSF) is disordered. The span at 1183-1192 (SEDDNDEEAD) shows a compositional bias: acidic residues. Residues Asn1309, Asn1368, Asn1453, Asn1785, Asn1921, Asn2130, Asn2146, Asn2280, Asn2337, Asn2520, Asn2578, Asn2719, and Asn2869 are each glycosylated (N-linked (GlcNAc...) asparagine).

Belongs to the CSF1 family. In terms of assembly, interacts with MCD4; CSF1 channels phosphatidylethanolamine to MCD4 in the endoplasmic reticulum at contact sites to support GPI anchor biosynthesis.

Its subcellular location is the cell membrane. It localises to the endoplasmic reticulum membrane. The protein localises to the mitochondrion membrane. In terms of biological role, tube-forming lipid transport protein which provides phosphatidylethanolamine for glycosylphosphatidylinositol (GPI) anchor synthesis in the endoplasmic reticulum. Required for the glucose and other nutrients uptake at low temperature. In Saccharomyces cerevisiae (strain ATCC 204508 / S288c) (Baker's yeast), this protein is Protein CSF1.